Reading from the N-terminus, the 513-residue chain is Zinc finger CCCH-type with G patch domain-containing protein (513 aa).

The segment at Pro155–Leu178 adopts a C3H1-type zinc-finger fold. Composition is skewed to acidic residues over residues Asp252–Ser261 and Ser273–Leu283. Residues Asp252–Leu283 form a disordered region. Residues Thr312–Glu358 form the G-patch domain. The span at Gln477–Arg495 shows a compositional bias: polar residues. Residues Gln477–Phe513 are disordered. Residues Ser496–Phe513 are compositionally biased toward basic and acidic residues.

The protein resides in the nucleus. Its function is as follows. Transcription repressor. This chain is Zinc finger CCCH-type with G patch domain-containing protein, found in Drosophila simulans (Fruit fly).